The primary structure comprises 585 residues: Aspartate--tRNA ligase (585 aa).

E173 is a binding site for L-aspartate. Residues 197–200 (QTLK) are aspartate. Residue R219 participates in L-aspartate binding. ATP is bound by residues 219–221 (RDE) and Q228. An L-aspartate-binding site is contributed by H446. ATP is bound at residue E480. An L-aspartate-binding site is contributed by R487. 532-535 (GLDR) serves as a coordination point for ATP.

The protein belongs to the class-II aminoacyl-tRNA synthetase family. Type 1 subfamily. As to quaternary structure, homodimer.

The protein resides in the cytoplasm. It catalyses the reaction tRNA(Asp) + L-aspartate + ATP = L-aspartyl-tRNA(Asp) + AMP + diphosphate. Functionally, catalyzes the attachment of L-aspartate to tRNA(Asp) in a two-step reaction: L-aspartate is first activated by ATP to form Asp-AMP and then transferred to the acceptor end of tRNA(Asp). The sequence is that of Aspartate--tRNA ligase from Bacteroides fragilis (strain YCH46).